Consider the following 77-residue polypeptide: U8-lycotoxin-Ls1v (77 aa).

Residues 1 to 20 form the signal peptide; sequence MKLIIFTGLVLFGIVSLIEA. The propeptide occupies 21-26; the sequence is QAENEK.

The protein belongs to the neurotoxin 19 (CSTX) family. 08 (U8-Lctx) subfamily. Contains 4 disulfide bonds. In terms of tissue distribution, expressed by the venom gland.

It is found in the secreted. The chain is U8-lycotoxin-Ls1v from Lycosa singoriensis (Wolf spider).